The chain runs to 455 residues: UDP-N-acetylmuramoylalanine--D-glutamate ligase (455 aa).

Gly-117–Thr-123 contacts ATP.

It belongs to the MurCDEF family.

Its subcellular location is the cytoplasm. It carries out the reaction UDP-N-acetyl-alpha-D-muramoyl-L-alanine + D-glutamate + ATP = UDP-N-acetyl-alpha-D-muramoyl-L-alanyl-D-glutamate + ADP + phosphate + H(+). The protein operates within cell wall biogenesis; peptidoglycan biosynthesis. Functionally, cell wall formation. Catalyzes the addition of glutamate to the nucleotide precursor UDP-N-acetylmuramoyl-L-alanine (UMA). This Symbiobacterium thermophilum (strain DSM 24528 / JCM 14929 / IAM 14863 / T) protein is UDP-N-acetylmuramoylalanine--D-glutamate ligase.